The primary structure comprises 1482 residues: Calcium-dependent protein kinase 6 (1482 aa).

Disordered regions lie at residues 250–320 and 739–760; these read TNNY…IRPN and SENF…DDSN. Over residues 254 to 264 the composition is skewed to polar residues; it reads AHDNNQDSNSY. Acidic residues predominate over residues 277–301; that stretch reads EEDNDTGDTYADNEEDEDNRDDNDD. The span at 302-318 shows a compositional bias: polar residues; sequence YSQYNQCEVESDTNQIR. Over residues 739-748 the composition is skewed to low complexity; that stretch reads SENFSNNFND. Residues 749–760 show a composition bias toward basic and acidic residues; that stretch reads NKQKSLKNDDSN. 2 EF-hand domains span residues 931–966 and 972–1007; these read IFER…LCYN and VDKK…LLKQ. Residues D985, S987, N989, C991, and D996 each coordinate Ca(2+). The Protein kinase domain maps to 1043–1295; it reads LSFKKILGCG…AAVLLHHPWF (253 aa). ATP is bound by residues 1049–1057 and K1072; that span reads LGCGAFGEV. D1162 (proton acceptor) is an active-site residue. 4 EF-hand domains span residues 1338 to 1373, 1376 to 1406, 1407 to 1442, and 1468 to 1482; these read NHVK…AGVK, DINR…RWKN, IDST…NGVN, and KISF…LSTF. Ca(2+) contacts are provided by D1351, N1353, N1355, S1357, and E1362. The Ca(2+) site is built by D1420, D1422, D1424, Y1426, and D1431.

The protein belongs to the protein kinase superfamily. Ser/Thr protein kinase family. CDPK subfamily. It depends on Mg(2+) as a cofactor.

The enzyme catalyses L-seryl-[protein] + ATP = O-phospho-L-seryl-[protein] + ADP + H(+). It carries out the reaction L-threonyl-[protein] + ATP = O-phospho-L-threonyl-[protein] + ADP + H(+). Its activity is regulated as follows. Activated by calcium. Calcium-dependent protein kinase which acts as a sensor and effector of intracellular Ca(2+) levels. In sporozoites, probably involved in the secretion of the cysteine protease that cleaves circumsporozoite protein CSP, thereby exposing CSP TSR domain, which binds with high affinity to highly sulfated heparan sulfate proteoglycans (HSPGs), resulting in productive invasion of the host hepatocytes. The polypeptide is Calcium-dependent protein kinase 6 (Plasmodium berghei (strain Anka)).